Consider the following 591-residue polypeptide: Probable sulfoacetaldehyde acetyltransferase (591 aa).

Positions 359–383 (MDHEDDDPGTEWNVGARQREPDRMS) are disordered.

This sequence belongs to the TPP enzyme family. It depends on Mg(2+) as a cofactor. Requires thiamine diphosphate as cofactor.

It localises to the cytoplasm. The catalysed reaction is acetyl phosphate + sulfite + H(+) = sulfoacetaldehyde + phosphate. It participates in organosulfur degradation; taurine degradation via aerobic pathway; acetyl phosphate and sulfite from taurine: step 2/2. The chain is Probable sulfoacetaldehyde acetyltransferase (xsc) from Rhizobium meliloti (strain 1021) (Ensifer meliloti).